The following is a 60-amino-acid chain: Large ribosomal subunit protein bL32 (60 aa).

This sequence belongs to the bacterial ribosomal protein bL32 family.

The sequence is that of Large ribosomal subunit protein bL32 (rpmF) from Thermotoga maritima (strain ATCC 43589 / DSM 3109 / JCM 10099 / NBRC 100826 / MSB8).